The primary structure comprises 370 residues: 3-dehydroquinate synthase (370 aa).

Residues 108 to 112 (GVIGD), 132 to 133 (TT), Lys145, and Lys154 contribute to the NAD(+) site. Zn(2+) is bound by residues Glu187, His249, and His267.

It belongs to the sugar phosphate cyclases superfamily. Dehydroquinate synthase family. It depends on Co(2+) as a cofactor. Requires Zn(2+) as cofactor. NAD(+) is required as a cofactor.

The protein localises to the cytoplasm. It carries out the reaction 7-phospho-2-dehydro-3-deoxy-D-arabino-heptonate = 3-dehydroquinate + phosphate. It functions in the pathway metabolic intermediate biosynthesis; chorismate biosynthesis; chorismate from D-erythrose 4-phosphate and phosphoenolpyruvate: step 2/7. Functionally, catalyzes the conversion of 3-deoxy-D-arabino-heptulosonate 7-phosphate (DAHP) to dehydroquinate (DHQ). The protein is 3-dehydroquinate synthase of Cereibacter sphaeroides (strain ATCC 17023 / DSM 158 / JCM 6121 / CCUG 31486 / LMG 2827 / NBRC 12203 / NCIMB 8253 / ATH 2.4.1.) (Rhodobacter sphaeroides).